A 146-amino-acid chain; its full sequence is Basic phospholipase A2 beta-bungarotoxin A2 chain (146 aa).

An N-terminal signal peptide occupies residues 1-19 (MNPAHLLVLSAVCVSLLGA). The propeptide occupies 20–27 (SNIPPQSL). Intrachain disulfides connect Cys54–Cys145, Cys56–Cys72, Cys71–Cys126, Cys78–Cys119, Cys87–Cys112, and Cys105–Cys117. Ca(2+) is bound by residues Tyr55, Gly57, and Gly59. His75 is an active-site residue. Asp76 contributes to the Ca(2+) binding site. Asp120 is a catalytic residue.

It belongs to the phospholipase A2 family. Group I subfamily. D49 sub-subfamily. As to quaternary structure, heterodimer; disulfide-linked. The A chain has phospholipase A2 activity and the B chain shows homology with the basic protease inhibitors. It depends on Ca(2+) as a cofactor. As to expression, expressed by the venom gland.

It is found in the secreted. It catalyses the reaction a 1,2-diacyl-sn-glycero-3-phosphocholine + H2O = a 1-acyl-sn-glycero-3-phosphocholine + a fatty acid + H(+). In terms of biological role, snake venom phospholipase A2 (PLA2) that inhibits neuromuscular transmission by blocking acetylcholine release from the nerve termini. PLA2 catalyzes the calcium-dependent hydrolysis of the 2-acyl groups in 3-sn-phosphoglycerides. This Bungarus flaviceps flaviceps (Red-headed krait) protein is Basic phospholipase A2 beta-bungarotoxin A2 chain.